The chain runs to 236 residues: UPF0257 lipoprotein YnfC (236 aa).

A signal peptide spans 1–16 (MKYKLLPCLLAILLTG). Cys-17 carries N-palmitoyl cysteine lipidation. Cys-17 is lipidated: S-diacylglycerol cysteine.

Belongs to the UPF0257 family.

Its subcellular location is the cell membrane. This chain is UPF0257 lipoprotein YnfC, found in Escherichia coli O157:H7.